The chain runs to 486 residues: ATP synthase subunit beta 2 (486 aa).

166 to 173 (GGAGVGKT) contacts ATP.

It belongs to the ATPase alpha/beta chains family. In terms of assembly, F-type ATPases have 2 components, CF(1) - the catalytic core - and CF(0) - the membrane proton channel. CF(1) has five subunits: alpha(3), beta(3), gamma(1), delta(1), epsilon(1). CF(0) has three main subunits: a(1), b(2) and c(9-12). The alpha and beta chains form an alternating ring which encloses part of the gamma chain. CF(1) is attached to CF(0) by a central stalk formed by the gamma and epsilon chains, while a peripheral stalk is formed by the delta and b chains.

The protein resides in the cell inner membrane. The catalysed reaction is ATP + H2O + 4 H(+)(in) = ADP + phosphate + 5 H(+)(out). Its function is as follows. Produces ATP from ADP in the presence of a proton gradient across the membrane. The catalytic sites are hosted primarily by the beta subunits. This chain is ATP synthase subunit beta 2, found in Gluconobacter oxydans (strain 621H) (Gluconobacter suboxydans).